The following is a 446-amino-acid chain: UDP-N-acetylmuramoylalanine--D-glutamate ligase (446 aa).

115–121 (GTNGKTT) provides a ligand contact to ATP.

Belongs to the MurCDEF family.

The protein localises to the cytoplasm. The catalysed reaction is UDP-N-acetyl-alpha-D-muramoyl-L-alanine + D-glutamate + ATP = UDP-N-acetyl-alpha-D-muramoyl-L-alanyl-D-glutamate + ADP + phosphate + H(+). Its pathway is cell wall biogenesis; peptidoglycan biosynthesis. Its function is as follows. Cell wall formation. Catalyzes the addition of glutamate to the nucleotide precursor UDP-N-acetylmuramoyl-L-alanine (UMA). In Trichlorobacter lovleyi (strain ATCC BAA-1151 / DSM 17278 / SZ) (Geobacter lovleyi), this protein is UDP-N-acetylmuramoylalanine--D-glutamate ligase.